The following is a 159-amino-acid chain: uncharacterized protein (159 aa).

Residues 7–151 (LLINYKTLEE…NPLIWEPAHI (145 aa)) enclose the N-acetyltransferase domain.

This is an uncharacterized protein from Bacillus pumilus (strain SAFR-032).